The sequence spans 315 residues: Olfactory receptor 10A4 (315 aa).

The Extracellular segment spans residues 1-26; the sequence is MMWENWTIVSEFVLVSFSALSTELQA. N-linked (GlcNAc...) asparagine glycosylation occurs at N5. A helical membrane pass occupies residues 27–47; sequence LLFLLFLTIYLVTLMGNVLII. Over 48–55 the chain is Cytoplasmic; the sequence is LVTIADSA. The helical transmembrane segment at 56-76 threads the bilayer; sequence LQSPMYFFLRNLSFLEIGFNL. The Extracellular portion of the chain corresponds to 77–100; the sequence is VIVPKMLGTLIIQDTTISFLGCAT. The cysteines at positions 98 and 190 are disulfide-linked. The chain crosses the membrane as a helical span at residues 101–121; it reads QMYFFFFFGAAECCLLATMAY. The Cytoplasmic segment spans residues 122-140; sequence DRYVAICDPLHYPVIMGHI. A helical transmembrane segment spans residues 141 to 161; sequence SCAQLAAASWFSGFSVATVQT. Residues 162–198 are Extracellular-facing; the sequence is TWIFSFPFCGPNRVNHFFCDSPPVIALVCADTSVFEL. Residues 199–218 traverse the membrane as a helical segment; the sequence is EALTATVLFILFPFLLILGS. The Cytoplasmic segment spans residues 219–238; that stretch reads YVRILSTIFRMPSAEGKHQA. Residues 239–259 form a helical membrane-spanning segment; it reads FSTCSAHLLVVSLFYSTAILT. Over 260-272 the chain is Extracellular; the sequence is YFRPQSSASSESK. The chain crosses the membrane as a helical span at residues 273–293; sequence KLLSLSSTVVTPMLNPIIYSS. At 294–315 the chain is on the cytoplasmic side; sequence RNKEVKAALKRLIHRTLGSQKL.

The protein belongs to the G-protein coupled receptor 1 family. As to expression, expressed in the tongue.

The protein localises to the cell membrane. In terms of biological role, odorant receptor (Potential). May be involved in taste perception. The polypeptide is Olfactory receptor 10A4 (OR10A4) (Homo sapiens (Human)).